We begin with the raw amino-acid sequence, 151 residues long: UPF0178 protein YaiI (151 aa).

Belongs to the UPF0178 family.

In Salmonella choleraesuis (strain SC-B67), this protein is UPF0178 protein YaiI.